We begin with the raw amino-acid sequence, 283 residues long: uncharacterized protein (283 aa).

The first 25 residues, 1–25, serve as a signal peptide directing secretion; the sequence is MNKKRLLFRTPLDALFLLFGTALSA. A lipid anchor (N-palmitoyl cysteine) is attached at Cys26. Residue Cys26 is the site of S-diacylglycerol cysteine attachment.

This sequence belongs to the MG439/MG440 family.

The protein localises to the cell membrane. This is an uncharacterized protein from Mycoplasma pneumoniae (strain ATCC 29342 / M129 / Subtype 1) (Mycoplasmoides pneumoniae).